Consider the following 173-residue polypeptide: ATP synthase subunit b (173 aa).

A helical membrane pass occupies residues 12 to 34; that stretch reads AFGNLYAIGWSAVNFLVLLALMY.

Belongs to the ATPase B chain family. F-type ATPases have 2 components, F(1) - the catalytic core - and F(0) - the membrane proton channel. F(1) has five subunits: alpha(3), beta(3), gamma(1), delta(1), epsilon(1). F(0) has three main subunits: a(1), b(2) and c(10-14). The alpha and beta chains form an alternating ring which encloses part of the gamma chain. F(1) is attached to F(0) by a central stalk formed by the gamma and epsilon chains, while a peripheral stalk is formed by the delta and b chains.

Its subcellular location is the cell membrane. In terms of biological role, f(1)F(0) ATP synthase produces ATP from ADP in the presence of a proton or sodium gradient. F-type ATPases consist of two structural domains, F(1) containing the extramembraneous catalytic core and F(0) containing the membrane proton channel, linked together by a central stalk and a peripheral stalk. During catalysis, ATP synthesis in the catalytic domain of F(1) is coupled via a rotary mechanism of the central stalk subunits to proton translocation. Component of the F(0) channel, it forms part of the peripheral stalk, linking F(1) to F(0). In Syntrophomonas wolfei subsp. wolfei (strain DSM 2245B / Goettingen), this protein is ATP synthase subunit b.